A 222-amino-acid chain; its full sequence is Coiled-coil domain-containing protein 70 (222 aa).

Coiled coils occupy residues 34–62 and 129–188; these read LQEE…WNFR and NALW…KAAW.

The chain is Coiled-coil domain-containing protein 70 (CCDC70) from Bos taurus (Bovine).